The following is a 275-amino-acid chain: Melanoma-associated antigen B5 (275 aa).

The disordered stretch occupies residues 1-33 (MTSAGVFNAGSDERANSRDEEYPCSSEVSPSTE). Over residues 11 to 21 (SDERANSRDEE) the composition is skewed to basic and acidic residues. Positions 23 to 33 (PCSSEVSPSTE) are enriched in low complexity. The MAGE domain maps to 40 to 239 (INIKVGLLEQ…GAFSSQYEEA (200 aa)).

Expressed in testis. Not expressed in other normal tissues, but is expressed in tumors of different histological origins.

The chain is Melanoma-associated antigen B5 (MAGEB5) from Homo sapiens (Human).